A 325-amino-acid chain; its full sequence is tRNA dimethylallyltransferase (325 aa).

ATP is bound at residue G16 to T23. T18 to T23 contributes to the substrate binding site. 4 interaction with substrate tRNA regions span residues D41 to L44, Q165 to R169, R253 to R258, and K286 to R293.

Belongs to the IPP transferase family. Monomer. The cofactor is Mg(2+).

The catalysed reaction is adenosine(37) in tRNA + dimethylallyl diphosphate = N(6)-dimethylallyladenosine(37) in tRNA + diphosphate. Functionally, catalyzes the transfer of a dimethylallyl group onto the adenine at position 37 in tRNAs that read codons beginning with uridine, leading to the formation of N6-(dimethylallyl)adenosine (i(6)A). The chain is tRNA dimethylallyltransferase from Ralstonia pickettii (strain 12J).